We begin with the raw amino-acid sequence, 156 residues long: RNA polymerase sigma factor SigS (156 aa).

The Polymerase core binding signature appears at 29–44 (EYYQLLLIKMWQLSQI). The H-T-H motif DNA-binding region spans 126-145 (QFEIAEIMSLSLSTIKLIKM).

The protein belongs to the sigma-70 factor family.

Its function is as follows. Sigma factors are initiation factors that promote the attachment of RNA polymerase to specific initiation sites and are then released. Sigma-S contributes to the protection against external stress, thus playing a role in cellular fitness and survival. This Staphylococcus aureus (strain COL) protein is RNA polymerase sigma factor SigS (sigS).